Here is a 399-residue protein sequence, read N- to C-terminus: C-type lectin domain family 4 member M (399 aa).

The Cytoplasmic segment spans residues 1-49 (MSDSKEQRVQPLGLLEEDPTTSGIRLFPRDFQFQQTHGHKSSTGCLGHG). An Endocytosis signal motif is present at residues 14–15 (LL). Residues 50–70 (PLVLQLLSFTLLAGVLVAILV) traverse the membrane as a helical; Signal-anchor for type II membrane protein segment. Over 71 to 399 (QVYKVPSSLS…KKPTACFRDE (329 aa)) the chain is Extracellular. Residue Asn-92 is glycosylated (N-linked (GlcNAc...) asparagine). A run of 7 repeats spans residues 108–130 (KLQE…PEKS), 131–153 (TLQE…PEKS), 154–176 (RLQE…PEKS), 177–199 (KQQE…PEKS), 200–222 (KQQE…PEKS), 223–245 (KQQE…PDQS), and 246–268 (KQQQ…CCRC). The segment at 108–269 (KLQEIYQELI…AFERLCCRCP (162 aa)) is 7 X approximate tandem repeats. 4 cysteine pairs are disulfide-bonded: Cys-265/Cys-395, Cys-268/Cys-279, Cys-296/Cys-389, and Cys-368/Cys-381. In terms of domain architecture, C-type lectin spans 274 to 390 (FFQGNCYFIS…CNVDNYWICK (117 aa)). Ca(2+)-binding residues include Glu-359, Asn-361, Ser-363, Glu-366, Asn-377, and Asp-378. A glycan (N-linked (GlcNAc...) asparagine) is linked at Asn-361.

As to quaternary structure, homotetramer.

The protein resides in the membrane. Functionally, probable pathogen-recognition receptor involved in peripheral immune surveillance in liver. May mediate the endocytosis of pathogens which are subsequently degraded in lysosomal compartments. Probably recognizes in a calcium-dependent manner high mannose N-linked oligosaccharides in a variety of pathogen antigens. Is a receptor for ICAM3, probably by binding to mannose-like carbohydrates. The chain is C-type lectin domain family 4 member M (CLEC4M) from Hylobates lar (Lar gibbon).